The sequence spans 668 residues: Neurexin-3-beta (668 aa).

Residues 1–35 (MHLRTNPSICPGRRPAWTLWMCSLFWGCIVSSVWS) form the signal peptide. Residues 36–593 (SSNVASSASS…EVVRESSSTT (558 aa)) are Extracellular-facing. Residues 84-284 (ATYIFGKSGG…NPNIKINGSV (201 aa)) form the Laminin G-like domain. The disordered stretch occupies residues 510 to 529 (TASSSTGMVPKLPAGKMNNR). Residues 594–614 (GMVVGIVAAAALCILILLYAM) traverse the membrane as a helical segment. Topologically, residues 615-668 (YKYRNRDEGSYQVDETRNYISNSAQSNGTLMKEKQQSSKSGHKKQKNKDKEYYV) are cytoplasmic. The segment at 636-668 (NSAQSNGTLMKEKQQSSKSGHKKQKNKDKEYYV) is disordered.

It belongs to the neurexin family. In terms of processing, processed by alpha-secretase leading to the formation of an extracellular soluble protein as well as a C-terminal membrane-embedded fragment (CTF). Proteolysis of these CTFs by gamma-secretase releases intracellular domains (ICDs) and extracellular peptides. As to expression, brain and arteries (at protein level).

Its subcellular location is the membrane. Neuronal cell surface protein that may be involved in cell recognition and cell adhesion. Plays a role in angiogenesis. In Gallus gallus (Chicken), this protein is Neurexin-3-beta (NRXN3).